We begin with the raw amino-acid sequence, 653 residues long: Ran-binding protein 9 (653 aa).

The span at 1–21 (MSGQPPPPPPQQQPPPPPPPA) shows a compositional bias: pro residues. Positions 1 to 62 (MSGQPPPPPP…SAAAPFPHGD (62 aa)) are disordered. Residues 22-57 (SAAAPATAPPGLAVGPGPAAGVPVPGLAAGSSAAAP) show a composition bias toward low complexity. Residues 72–259 (LQRRLKRLYP…VDANFGQHPF (188 aa)) enclose the B30.2/SPRY domain. Residues 290-322 (WQTMIQKMVSSYLVHHGYCATAEAFARSTDQTV) enclose the LisH domain. Residues 326 to 332 (LASIKNR) form an interaction with CALB1 region. One can recognise a CTLH domain in the interval 328 to 385 (SIKNRQRIQKLVLAGRMGEAIETTQQLYPSLLERNPNLLFTLKVRQFIEMVNGTDSEV). At lysine 330 the chain carries N6-acetyllysine. The interval 386–422 (RCLGGRSPKSQDSYPVSPRPFSSPSMSPSHGMSIHSL) is disordered. Residues 398-421 (SYPVSPRPFSSPSMSPSHGMSIHS) show a composition bias toward low complexity. Residues serine 402 and serine 412 each carry the phosphoserine modification. Positions 539–653 (AAIERMIHFG…AFATVEDYLH (115 aa)) are interaction with FMR1.

It belongs to the RANBP9/10 family. In terms of assembly, part of a complex consisting of RANBP9, MKLN1 and GID8. Identified in the CTLH complex that contains GID4, RANBP9 and/or RANBP10, MKLN1, MAEA, RMND5A (or alternatively its paralog RMND5B), GID8, ARMC8, WDR26 and YPEL5. Within this complex, MAEA, RMND5A (or alternatively its paralog RMND5B), GID8, WDR26, and RANBP9 and/or RANBP10 form the catalytic core, while GID4, MKLN1, ARMC8 and YPEL5 have ancillary roles. Interacts with GTP-bound Ran, AR, CDC2L1/p110C, CALB1, S100A7, USP11, SOS1 or SOS2, GID8, and FMR1. Interacts with the Dyrk kinases HIPK2, DYRK1A, and DYRK1B. Interacts with TP73 isoform Alpha but not with TP53. Interacts with the HGF receptor MET and the integrins ITGB1 and ITGB2, but not with ITGAL. Part of a complex consisting of RANBP9, RAN, DYRK1B and COPS5. Directly interacts with RANBP10. Interacts with YPEL5. Interacts with MKLN1. Interacts with DDX4. Interacts with NGFR. Interacts with Tex19.1 and, probably, Tex19.2. Phosphorylated in response to stress. Post-translationally, ubiquitinated. Polyubiquitination targets the protein for rapid degradation via the ubiquitin system. Ubiquitously expressed, with highest levels in maturating spermatocytes.

Its subcellular location is the cytoplasm. The protein localises to the cell membrane. It is found in the nucleus. In terms of biological role, may act as scaffolding protein, and as adapter protein to couple membrane receptors to intracellular signaling pathways. Acts as a mediator of cell spreading and actin cytoskeleton rearrangement. Core component of the CTLH E3 ubiquitin-protein ligase complex that selectively accepts ubiquitin from UBE2H and mediates ubiquitination and subsequent proteasomal degradation of the transcription factor HBP1. May be involved in signaling of ITGB2/LFA-1 and other integrins. Enhances HGF-MET signaling by recruiting Sos and activating the Ras pathway. Enhances dihydrotestosterone-induced transactivation activity of AR, as well as dexamethasone-induced transactivation activity of NR3C1, but not affect estrogen-induced transactivation. Stabilizes TP73 isoform Alpha, probably by inhibiting its ubiquitination, and increases its proapoptotic activity. Inhibits the kinase activity of DYRK1A and DYRK1B. Inhibits FMR1 binding to RNA. In Mus musculus (Mouse), this protein is Ran-binding protein 9.